Consider the following 190-residue polypeptide: Potassium-transporting ATPase KdpC subunit (190 aa).

Residues 11–31 traverse the membrane as a helical segment; the sequence is LIVLMSLITGVAYPLVVTGVA.

It belongs to the KdpC family. The system is composed of three essential subunits: KdpA, KdpB and KdpC.

The protein localises to the cell inner membrane. In terms of biological role, part of the high-affinity ATP-driven potassium transport (or Kdp) system, which catalyzes the hydrolysis of ATP coupled with the electrogenic transport of potassium into the cytoplasm. This subunit acts as a catalytic chaperone that increases the ATP-binding affinity of the ATP-hydrolyzing subunit KdpB by the formation of a transient KdpB/KdpC/ATP ternary complex. This chain is Potassium-transporting ATPase KdpC subunit, found in Pseudomonas syringae pv. tomato (strain ATCC BAA-871 / DC3000).